We begin with the raw amino-acid sequence, 197 residues long: MSSAVSASPQAASPQQDRTSGLSARYARALYELADERKQLDEVVSEMAALGRLFAEDPSLRRLIASRSIDAREAGRAMEQVLASQGVSDLVRNFIGTAIANRRLADLPSLVAGFAVYVAEKRGVVAADIASAHPLTDTQRAQLTARLAEAGYGRVTIRETVDPSLLGGLTVRIGSKLYDTSLKSRLQRLRHVMKGAA.

Over residues 1 to 16 (MSSAVSASPQAASPQQ) the composition is skewed to low complexity. The tract at residues 1-20 (MSSAVSASPQAASPQQDRTS) is disordered.

It belongs to the ATPase delta chain family. F-type ATPases have 2 components, F(1) - the catalytic core - and F(0) - the membrane proton channel. F(1) has five subunits: alpha(3), beta(3), gamma(1), delta(1), epsilon(1). F(0) has three main subunits: a(1), b(2) and c(10-14). The alpha and beta chains form an alternating ring which encloses part of the gamma chain. F(1) is attached to F(0) by a central stalk formed by the gamma and epsilon chains, while a peripheral stalk is formed by the delta and b chains.

It is found in the cell inner membrane. Functionally, f(1)F(0) ATP synthase produces ATP from ADP in the presence of a proton or sodium gradient. F-type ATPases consist of two structural domains, F(1) containing the extramembraneous catalytic core and F(0) containing the membrane proton channel, linked together by a central stalk and a peripheral stalk. During catalysis, ATP synthesis in the catalytic domain of F(1) is coupled via a rotary mechanism of the central stalk subunits to proton translocation. This protein is part of the stalk that links CF(0) to CF(1). It either transmits conformational changes from CF(0) to CF(1) or is implicated in proton conduction. The polypeptide is ATP synthase subunit delta (Acidiphilium cryptum (strain JF-5)).